We begin with the raw amino-acid sequence, 186 residues long: Nucleoside diphosphate kinase 6 (186 aa).

Residues lysine 19, phenylalanine 68, arginine 96, threonine 102, arginine 116, and asparagine 126 each coordinate ATP. Histidine 129 acts as the Pros-phosphohistidine intermediate in catalysis.

It belongs to the NDK family. Requires Mg(2+) as cofactor. In terms of tissue distribution, expressed at a moderately low level in many tissues. Most abundant in kidney, prostate, ovary, intestine, and spleen.

The catalysed reaction is a 2'-deoxyribonucleoside 5'-diphosphate + ATP = a 2'-deoxyribonucleoside 5'-triphosphate + ADP. The enzyme catalyses a ribonucleoside 5'-diphosphate + ATP = a ribonucleoside 5'-triphosphate + ADP. In terms of biological role, major role in the synthesis of nucleoside triphosphates other than ATP. The ATP gamma phosphate is transferred to the NDP beta phosphate via a ping-pong mechanism, using a phosphorylated active-site intermediate. Inhibitor of p53-induced apoptosis. The polypeptide is Nucleoside diphosphate kinase 6 (NME6) (Homo sapiens (Human)).